Consider the following 375-residue polypeptide: RNA exonuclease 4 (375 aa).

Residues K21–F78 are disordered. Low complexity predominate over residues S25–S35. Residues T53–G64 are compositionally biased toward basic and acidic residues. The 164-residue stretch at N134 to E297 folds into the Exonuclease domain.

Belongs to the REXO4 family.

Its subcellular location is the nucleus. Its function is as follows. Exoribonuclease involved in ribosome biosynthesis. Involved in the processing of ITS1, the internal transcribed spacer localized between the 18S and 5.8S rRNAs. In Mycosarcoma maydis (Corn smut fungus), this protein is RNA exonuclease 4 (REX4).